The following is a 497-amino-acid chain: Glycerol kinase (497 aa).

T13 provides a ligand contact to ADP. Residues T13, T14, and S15 each coordinate ATP. T13 contacts sn-glycerol 3-phosphate. R17 serves as a coordination point for ADP. Residues R83, E84, and Y135 each coordinate sn-glycerol 3-phosphate. Positions 83, 84, and 135 each coordinate glycerol. H231 carries the post-translational modification Phosphohistidine; by HPr. D245 is a binding site for sn-glycerol 3-phosphate. Glycerol-binding residues include D245 and Q246. ADP is bound by residues T267 and G310. The ATP site is built by T267, G310, Q314, and G411. Residues G411 and N415 each coordinate ADP.

It belongs to the FGGY kinase family. As to quaternary structure, homotetramer and homodimer (in equilibrium). The phosphoenolpyruvate-dependent sugar phosphotransferase system (PTS), including enzyme I, and histidine-containing protein (HPr) are required for the phosphorylation, which leads to the activation of the enzyme.

It carries out the reaction glycerol + ATP = sn-glycerol 3-phosphate + ADP + H(+). Its pathway is polyol metabolism; glycerol degradation via glycerol kinase pathway; sn-glycerol 3-phosphate from glycerol: step 1/1. With respect to regulation, activated by phosphorylation and inhibited by fructose 1,6-bisphosphate (FBP). Key enzyme in the regulation of glycerol uptake and metabolism. Catalyzes the phosphorylation of glycerol to yield sn-glycerol 3-phosphate. The polypeptide is Glycerol kinase (Halalkalibacterium halodurans (strain ATCC BAA-125 / DSM 18197 / FERM 7344 / JCM 9153 / C-125) (Bacillus halodurans)).